Reading from the N-terminus, the 117-residue chain is Large ribosomal subunit protein uL18 (117 aa).

Belongs to the universal ribosomal protein uL18 family. As to quaternary structure, part of the 50S ribosomal subunit; part of the 5S rRNA/L5/L18/L25 subcomplex. Contacts the 5S and 23S rRNAs.

This is one of the proteins that bind and probably mediate the attachment of the 5S RNA into the large ribosomal subunit, where it forms part of the central protuberance. In Halorhodospira halophila (strain DSM 244 / SL1) (Ectothiorhodospira halophila (strain DSM 244 / SL1)), this protein is Large ribosomal subunit protein uL18.